We begin with the raw amino-acid sequence, 210 residues long: Large ribosomal subunit protein uL4 (210 aa).

Residues 46 to 85 (QGTASTLTRSEVRGGGRKPYKQKGTGRARQGSIRTPLRPG) form a disordered region. Basic residues predominate over residues 60 to 71 (GGRKPYKQKGTG).

It belongs to the universal ribosomal protein uL4 family. In terms of assembly, part of the 50S ribosomal subunit.

One of the primary rRNA binding proteins, this protein initially binds near the 5'-end of the 23S rRNA. It is important during the early stages of 50S assembly. It makes multiple contacts with different domains of the 23S rRNA in the assembled 50S subunit and ribosome. Functionally, forms part of the polypeptide exit tunnel. The protein is Large ribosomal subunit protein uL4 of Prochlorococcus marinus (strain AS9601).